Consider the following 289-residue polypeptide: ATP synthase gamma chain (289 aa).

It belongs to the ATPase gamma chain family. In terms of assembly, F-type ATPases have 2 components, CF(1) - the catalytic core - and CF(0) - the membrane proton channel. CF(1) has five subunits: alpha(3), beta(3), gamma(1), delta(1), epsilon(1). CF(0) has three main subunits: a, b and c.

The protein resides in the cell inner membrane. Functionally, produces ATP from ADP in the presence of a proton gradient across the membrane. The gamma chain is believed to be important in regulating ATPase activity and the flow of protons through the CF(0) complex. This chain is ATP synthase gamma chain, found in Acinetobacter baylyi (strain ATCC 33305 / BD413 / ADP1).